A 1343-amino-acid polypeptide reads, in one-letter code: DNA-directed RNA polymerase subunit beta (1343 aa).

Belongs to the RNA polymerase beta chain family. In terms of assembly, the RNAP catalytic core consists of 2 alpha, 1 beta, 1 beta' and 1 omega subunit. When a sigma factor is associated with the core the holoenzyme is formed, which can initiate transcription.

The catalysed reaction is RNA(n) + a ribonucleoside 5'-triphosphate = RNA(n+1) + diphosphate. Functionally, DNA-dependent RNA polymerase catalyzes the transcription of DNA into RNA using the four ribonucleoside triphosphates as substrates. This is DNA-directed RNA polymerase subunit beta from Shewanella pealeana (strain ATCC 700345 / ANG-SQ1).